The sequence spans 445 residues: Homogentisate 1,2-dioxygenase (445 aa).

Lys-98 is subject to N6-acetyllysine. Residues His-335, Glu-341, and His-371 each contribute to the Fe cation site. Lys-414 is modified (N6-succinyllysine).

The protein belongs to the homogentisate dioxygenase family. As to quaternary structure, homohexamer arranged as a dimer of trimers. Requires Fe cation as cofactor.

The catalysed reaction is homogentisate + O2 = 4-maleylacetoacetate + H(+). It functions in the pathway amino-acid degradation; L-phenylalanine degradation; acetoacetate and fumarate from L-phenylalanine: step 4/6. Functionally, catalyzes the conversion of homogentisate to maleylacetoacetate. The protein is Homogentisate 1,2-dioxygenase (Hgd) of Mus musculus (Mouse).